A 202-amino-acid polypeptide reads, in one-letter code: Secreted RxLR effector protein 93 (202 aa).

Residues 1-16 (MRFYLTKLFAAAGALA) form the signal peptide. The disordered stretch occupies residues 29-58 (TPVSPLSRSSDHHQSDDSTQRRLRTLNGAD). A compositionally biased stretch (basic and acidic residues) spans 37-48 (SSDHHQSDDSTQ). Positions 49–61 (RRLRTLNGADEER) match the RxLR-dEER motif.

The protein belongs to the RxLR effector family.

The protein localises to the secreted. It is found in the host nucleus. Functionally, secreted effector that completely suppresses the host cell death induced by cell death-inducing proteins. This is Secreted RxLR effector protein 93 from Plasmopara viticola (Downy mildew of grapevine).